Reading from the N-terminus, the 255-residue chain is F-box/SPRY domain-containing protein 1 (255 aa).

The F-box domain occupies 3–51; that stretch reads DPVAALCNFNVLEVIFSYLDLNDLSRCSQVCRSWHHFLNDENSDVWRWH. A B30.2/SPRY domain is found at 61–253; that stretch reads MKSDLLTSVS…VSMVYLGTPL (193 aa).

The protein belongs to the FBXO45/Fsn family. In terms of assembly, component of an E3 ubiquitin ligase complex composed of hiw and Fsn.

It is found in the synapse. Its pathway is protein modification; protein ubiquitination. In terms of biological role, required in the presynaptic motoneuron to down-regulate the levels of wnd and restrain synaptic terminal growth at the neuromuscular junction (NMJ). The sequence is that of F-box/SPRY domain-containing protein 1 from Drosophila willistoni (Fruit fly).